Consider the following 256-residue polypeptide: Ribonuclease HII (256 aa).

In terms of domain architecture, RNase H type-2 spans 72–256; sequence QYVAGIDEVG…TFRPVPDYVN (185 aa). Residues Asp-78, Glu-79, and Asp-170 each contribute to the a divalent metal cation site.

This sequence belongs to the RNase HII family. Requires Mn(2+) as cofactor. Mg(2+) is required as a cofactor.

The protein localises to the cytoplasm. It catalyses the reaction Endonucleolytic cleavage to 5'-phosphomonoester.. Functionally, endonuclease that specifically degrades the RNA of RNA-DNA hybrids. In Limosilactobacillus fermentum (strain NBRC 3956 / LMG 18251) (Lactobacillus fermentum), this protein is Ribonuclease HII.